A 198-amino-acid polypeptide reads, in one-letter code: GTP-binding protein Di-Ras1 (198 aa).

GTP is bound by residues 17–22, 33–39, 61–65, 121–125, alanine 151, and 151–152; these read GVGKSS, RDTYIPT, DTTGS, NKCDE, and AK. The Effector region signature appears at 36 to 44; it reads YIPTIEDTY. Residues 178–192 are compositionally biased toward basic and acidic residues; that stretch reads DGKRSGKQKRTDRVK. A disordered region spans residues 178-198; it reads DGKRSGKQKRTDRVKGKCTLM. Cysteine 195 is subject to Cysteine methyl ester. A lipid anchor (S-geranylgeranyl cysteine) is attached at cysteine 195. The propeptide at 196-198 is removed in mature form; sequence TLM.

Belongs to the small GTPase superfamily. Di-Ras family. Highly expressed in heart and brain.

Its subcellular location is the cell membrane. Functionally, displays low GTPase activity and exists predominantly in the GTP-bound form. The sequence is that of GTP-binding protein Di-Ras1 (DIRAS1) from Homo sapiens (Human).